We begin with the raw amino-acid sequence, 308 residues long: Snake venom metalloprotease inhibitor 02D01 (308 aa).

The first 23 residues, 1–23 (MFVSRLAASGLLLLSLLALSLDG), serve as a signal peptide directing secretion. Residues 24-38 (KPLPQRQPHHIQPME) constitute a propeptide that is removed on maturation. The residue at position 39 (Q39) is a Pyrrolidone carboxylic acid. Residues 42–50 (LAPDAPPLE) constitute a propeptide that is removed on maturation. Q51 is modified (pyrrolidone carboxylic acid). Residues 54–62 (LAPDAPPLE) constitute a propeptide that is removed on maturation. Pyrrolidone carboxylic acid is present on Q63. Positions 66–74 (LAPAAPPLE) are excised as a propeptide. Q75 is modified (pyrrolidone carboxylic acid). Residues 78-86 (LAPDAPPME) constitute a propeptide that is removed on maturation. Q87 carries the pyrrolidone carboxylic acid modification. Residues 90–98 (LAPDAPPME) constitute a propeptide that is removed on maturation. Q99 bears the Pyrrolidone carboxylic acid mark. Residues 102–110 (LAPDAPPME) constitute a propeptide that is removed on maturation. Q111 carries the post-translational modification Pyrrolidone carboxylic acid. The propeptide occupies 114–122 (LAPDAPPME). Q123 is modified (pyrrolidone carboxylic acid). A propeptide spanning residues 126 to 134 (LAPDAAPLE) is cleaved from the precursor. Position 135 is a pyrrolidone carboxylic acid (Q135). The propeptide occupies 138–146 (LAPDAPPME). Pyrrolidone carboxylic acid is present on Q147. The propeptide occupies 150 to 158 (LAPDAPPME). Q159 is subject to Pyrrolidone carboxylic acid. Residues 162–249 (QPQIPSLMEQ…KQASQKWGRL (88 aa)) constitute a propeptide that is removed on maturation. The segment covering 172–182 (RQLSSGGTTAL) has biased composition (polar residues). Disordered stretches follow at residues 172–228 (RQLS…AAAT) and 252–279 (HDHD…GARR). The span at 198-209 (VVGGGGGGGGGS) shows a compositional bias: gly residues. Over residues 210–227 (KAALALPKPPKAKGAAAA) the composition is skewed to low complexity. Gly residues predominate over residues 265-277 (SVGGGGGGGGGGA). A propeptide spanning residues 278–286 (RRLKGLAKK) is cleaved from the precursor. C292 and C308 form a disulfide bridge.

This sequence in the C-terminal section; belongs to the natriuretic peptide family. It in the central section; belongs to the pHpG family. Expressed by the venom gland.

It is found in the secreted. Functionally, pEKW and poly-His-poly-Gly peptides may serve as metalloproteinase inhibitors during glandular storage. Their inhibition may be instantly disengaged, by dilution or physiochemical change, when venom is injected into tissue of the prey. In terms of biological role, has a vasorelaxant activity in rat aortic strips and a diuretic potency in anesthetized rats. May act by activating natriuretic receptors (NPR1 and/or NPR2). This chain is Snake venom metalloprotease inhibitor 02D01, found in Echis ocellatus (Ocellated saw-scaled viper).